A 118-amino-acid polypeptide reads, in one-letter code: Basic phospholipase A2 PA-5 (118 aa).

Cystine bridges form between Cys11–Cys71, Cys27–Cys117, Cys29–Cys45, Cys44–Cys98, Cys51–Cys91, Cys60–Cys84, and Cys78–Cys89. Tyr28, Gly30, and Gly32 together coordinate Ca(2+). The active site involves His48. A Ca(2+)-binding site is contributed by Asp49. Asp92 is an active-site residue.

It belongs to the phospholipase A2 family. Group I subfamily. D49 sub-subfamily. It depends on Ca(2+) as a cofactor. Expressed by the venom gland.

Its subcellular location is the secreted. The catalysed reaction is a 1,2-diacyl-sn-glycero-3-phosphocholine + H2O = a 1-acyl-sn-glycero-3-phosphocholine + a fatty acid + H(+). Functionally, PLA2 catalyzes the calcium-dependent hydrolysis of the 2-acyl groups in 3-sn-phosphoglycerides. The polypeptide is Basic phospholipase A2 PA-5 (Pseudechis australis (Mulga snake)).